The sequence spans 500 residues: Glycerol kinase (500 aa).

T12 lines the ADP pocket. The ATP site is built by T12, T13, and S14. T12 contributes to the sn-glycerol 3-phosphate binding site. R16 serves as a coordination point for ADP. Sn-glycerol 3-phosphate contacts are provided by R82, E83, Y135, and D245. Positions 82, 83, 135, 245, and 246 each coordinate glycerol. T267 and G310 together coordinate ADP. ATP-binding residues include T267, G310, Q314, and G411. ADP-binding residues include G411 and N415.

It belongs to the FGGY kinase family. In terms of assembly, homotetramer and homodimer (in equilibrium).

The catalysed reaction is glycerol + ATP = sn-glycerol 3-phosphate + ADP + H(+). Its pathway is polyol metabolism; glycerol degradation via glycerol kinase pathway; sn-glycerol 3-phosphate from glycerol: step 1/1. With respect to regulation, activated by phosphorylation and inhibited by fructose 1,6-bisphosphate (FBP). Its function is as follows. Key enzyme in the regulation of glycerol uptake and metabolism. Catalyzes the phosphorylation of glycerol to yield sn-glycerol 3-phosphate. The protein is Glycerol kinase of Clostridium perfringens (strain 13 / Type A).